Reading from the N-terminus, the 579-residue chain is Salivary alpha-glucosidase (579 aa).

Positions 1–18 (MKIFVPLLSFLLAGLTTG) are cleaved as a signal peptide. Residues D37, D39, D41, I43, D45, and N118 each coordinate Ca(2+). 2 N-linked (GlcNAc...) asparagine glycosylation sites follow: N118 and N151. D189 provides a ligand contact to Ca(2+). Residue D219 is the Nucleophile of the active site. 3 residues coordinate Ca(2+): Y223, L224, and E226. N282 is a glycosylation site (N-linked (GlcNAc...) asparagine). The Proton donor role is filled by E290. N-linked (GlcNAc...) asparagine glycosylation is found at N304, N325, and N401. N325 contributes to the N-acetyl-beta-D-glucosamine binding site.

It belongs to the glycosyl hydrolase 13 family. Saliva (at protein level). Proximal lateral lobes of the salivary gland (at protein level).

It localises to the secreted. It carries out the reaction Hydrolysis of terminal, non-reducing (1-&gt;4)-linked alpha-D-glucose residues with release of alpha-D-glucose.. Functionally, functions as a glucosidase that shows high activity toward sucrose, a major component of nectar. Assists the mosquito in its sugar-feeding capabilities. In Aedes aegypti (Yellowfever mosquito), this protein is Salivary alpha-glucosidase.